Here is a 336-residue protein sequence, read N- to C-terminus: Fructose-1,6-bisphosphatase class 1 (336 aa).

Positions 90, 112, 114, and 115 each coordinate Mg(2+). Substrate contacts are provided by residues 115–118 (DGSS), Asn-207, and Lys-273. A Mg(2+)-binding site is contributed by Glu-279.

This sequence belongs to the FBPase class 1 family. In terms of assembly, homotetramer. It depends on Mg(2+) as a cofactor.

It is found in the cytoplasm. The catalysed reaction is beta-D-fructose 1,6-bisphosphate + H2O = beta-D-fructose 6-phosphate + phosphate. The protein operates within carbohydrate biosynthesis; gluconeogenesis. The protein is Fructose-1,6-bisphosphatase class 1 of Xanthomonas oryzae pv. oryzae (strain PXO99A).